A 485-amino-acid polypeptide reads, in one-letter code: MMHFKSGLELTELQNMTVPEDDNVSNDSNDFTEVENGQINSKFISDRESRRSLTNSHLEKRKCDEYIPGTTSLGMSVFNLSNAIMGSGILGLAFALANTGILLFLILLTSVTLLSIYSINLLLICSKETGCMVYEKLGEQVFGTTGKLVIFGATSLQNTGAMLSYLFIVKNELPSAIKSLMGEEETFSAWYVDGRVLVVMVTFGIILPLCLLKNLGYLGYTSGFSLSCMVFFLIVVIYKKFQIPCMNGEQNSTVSANVTDACTPKYVTFNSKTVYALPTIAFAFVCHPSVLPIYSELKDRSQKKMQMVSNISFFAMFVMYFLTAIFGYLTFYEKVQSDLLHKYQSTGDILILTVRLAVIVAVILTVPVLFFTVRSSLFELAKKTKFHLCRHVLVTIILLVIINLLVIFIPSMKDIFGVVGVTSANMLIFILPSSLYLKITNQDGDKNTQRIWAALFLALGVLFSLISIPLVIYDWACSSSNGEGH.

Residues 1-74 (MMHFKSGLEL…EYIPGTTSLG (74 aa)) are Cytoplasmic-facing. Phosphoserine is present on serine 6. Threonine 11 carries the post-translational modification Phosphothreonine. 4 positions are modified to phosphoserine: serine 25, serine 28, serine 49, and serine 52. Threonine 54 carries the post-translational modification Phosphothreonine. A Phosphoserine modification is found at serine 56. A helical transmembrane segment spans residues 75 to 97 (MSVFNLSNAIMGSGILGLAFALA). Residues 98 to 112 (NTGILLFLILLTSVT) are Extracellular-facing. A helical membrane pass occupies residues 113-133 (LLSIYSINLLLICSKETGCMV). Residues 134-148 (YEKLGEQVFGTTGKL) are Cytoplasmic-facing. A helical transmembrane segment spans residues 149 to 169 (VIFGATSLQNTGAMLSYLFIV). Residues 170 to 188 (KNELPSAIKSLMGEEETFS) lie on the Extracellular side of the membrane. Residues 189-211 (AWYVDGRVLVVMVTFGIILPLCL) traverse the membrane as a helical segment. Over 212 to 216 (LKNLG) the chain is Cytoplasmic. Residues 217–237 (YLGYTSGFSLSCMVFFLIVVI) form a helical membrane-spanning segment. At 238–273 (YKKFQIPCMNGEQNSTVSANVTDACTPKYVTFNSKT) the chain is on the extracellular side. Cysteine 245 and cysteine 262 are oxidised to a cystine. N-linked (GlcNAc...) asparagine glycosylation is found at asparagine 251 and asparagine 257. A helical transmembrane segment spans residues 274 to 294 (VYALPTIAFAFVCHPSVLPIY). Topologically, residues 295 to 310 (SELKDRSQKKMQMVSN) are cytoplasmic. Residues 311-331 (ISFFAMFVMYFLTAIFGYLTF) traverse the membrane as a helical segment. The Extracellular portion of the chain corresponds to 332–348 (YEKVQSDLLHKYQSTGD). Residues 349 to 369 (ILILTVRLAVIVAVILTVPVL) form a helical membrane-spanning segment. The Cytoplasmic portion of the chain corresponds to 370–391 (FFTVRSSLFELAKKTKFHLCRH). A helical transmembrane segment spans residues 392-412 (VLVTIILLVIINLLVIFIPSM). The Extracellular segment spans residues 413 to 414 (KD). Residues 415-435 (IFGVVGVTSANMLIFILPSSL) traverse the membrane as a helical segment. The Cytoplasmic segment spans residues 436-450 (YLKITNQDGDKNTQR). Residues 451-471 (IWAALFLALGVLFSLISIPLV) form a helical membrane-spanning segment. Residues 472–485 (IYDWACSSSNGEGH) are Extracellular-facing.

Belongs to the amino acid/polyamine transporter 2 family. In terms of processing, N-glycosylation plays an important role in the L-glutamine transport. As to expression, specifically expressed in brain with the highest levels in cerebellum and thalamus (at protein level). Expressed in glutamatergic, GABAergic and a subset of dopaminergic neurons of the substantia nigra and cholinergic motoneurons (at protein level). Also expressed by ependymal cells lining the ventricle (at protein level). Expression is also detected in spinal cord, heart, colon and placenta.

It is found in the cell membrane. The enzyme catalyses L-glutamine(in) + Na(+)(in) = L-glutamine(out) + Na(+)(out). The catalysed reaction is L-alanine(in) + Na(+)(in) = L-alanine(out) + Na(+)(out). It carries out the reaction L-asparagine(in) + Na(+)(in) = L-asparagine(out) + Na(+)(out). It catalyses the reaction L-histidine(in) + Na(+)(in) = L-histidine(out) + Na(+)(out). The enzyme catalyses L-serine(in) + Na(+)(in) = L-serine(out) + Na(+)(out). The catalysed reaction is L-cysteine(in) + Na(+)(in) = L-cysteine(out) + Na(+)(out). It carries out the reaction L-methionine(in) + Na(+)(in) = L-methionine(out) + Na(+)(out). It catalyses the reaction glycine(in) + Na(+)(in) = glycine(out) + Na(+)(out). The enzyme catalyses L-threonine(in) + Na(+)(in) = L-threonine(out) + Na(+)(out). The catalysed reaction is L-proline(in) + Na(+)(in) = L-proline(out) + Na(+)(out). With respect to regulation, inhibited by alpha-(methylamino)isobutyric acid (MeAIB). Inhibited by lithium, potassium, choline ions, N-methylglucamine. The pH dependence has an allosteric effect on the transport. In terms of biological role, symporter that cotransports short-chain neutral amino acids and sodium ions from the extraccellular to the intracellular side of the cell membrane. The transport is elctrogenic, pH dependent and driven by the Na(+) electrochemical gradient. Participates in the astroglia-derived glutamine transport into GABAergic interneurons for neurotransmitter GABA de novo synthesis. May also contributes to amino acid transport in placental trophoblast. Regulates synaptic plasticity. This chain is Sodium-coupled neutral amino acid symporter 1, found in Rattus norvegicus (Rat).